The sequence spans 321 residues: Putative sulfotransferase vep-2 (321 aa).

The helical transmembrane segment at 11-31 (IARVLIIIASISVICITLFIS) threads the bilayer.

To C.elegans C41C4.1 and C18B2.2.

The protein resides in the membrane. The chain is Putative sulfotransferase vep-2 from Caenorhabditis elegans.